We begin with the raw amino-acid sequence, 239 residues long: Small ribosomal subunit protein uS3c (239 aa).

Positions 43–139 (IKNYIQKNRK…RFNISIEKVK (97 aa)) constitute a KH type-2 domain. The interval 50–74 (NRKKGSNRKIESDSSSEVITHNRKM) is disordered.

It belongs to the universal ribosomal protein uS3 family. In terms of assembly, part of the 30S ribosomal subunit.

Its subcellular location is the plastid. It is found in the chloroplast. This chain is Small ribosomal subunit protein uS3c (rps3), found in Hordeum vulgare (Barley).